We begin with the raw amino-acid sequence, 119 residues long: Holo-[acyl-carrier-protein] synthase (119 aa).

Residues Asp-8 and Glu-58 each contribute to the Mg(2+) site.

It belongs to the P-Pant transferase superfamily. AcpS family. Mg(2+) serves as cofactor.

The protein resides in the cytoplasm. It carries out the reaction apo-[ACP] + CoA = holo-[ACP] + adenosine 3',5'-bisphosphate + H(+). Functionally, transfers the 4'-phosphopantetheine moiety from coenzyme A to a Ser of acyl-carrier-protein. The polypeptide is Holo-[acyl-carrier-protein] synthase (Streptococcus thermophilus (strain CNRZ 1066)).